A 160-amino-acid polypeptide reads, in one-letter code: Ribosomal RNA large subunit methyltransferase H (160 aa).

S-adenosyl-L-methionine contacts are provided by Leu77 and Gly109.

Belongs to the RNA methyltransferase RlmH family. As to quaternary structure, homodimer.

The protein resides in the cytoplasm. It carries out the reaction pseudouridine(1915) in 23S rRNA + S-adenosyl-L-methionine = N(3)-methylpseudouridine(1915) in 23S rRNA + S-adenosyl-L-homocysteine + H(+). Functionally, specifically methylates the pseudouridine at position 1915 (m3Psi1915) in 23S rRNA. This chain is Ribosomal RNA large subunit methyltransferase H, found in Moorella thermoacetica (strain ATCC 39073 / JCM 9320).